The chain runs to 206 residues: Glycerol-3-phosphate acyltransferase (206 aa).

6 helical membrane-spanning segments follow: residues 4–24 (IIGI…LLVG), 55–75 (IIVL…PILL), 78–98 (ELHP…PVFA), 112–132 (MLLV…LTTL), 137–157 (MVSL…ITIG), and 158–178 (IVEQ…FVIF).

Belongs to the PlsY family. In terms of assembly, probably interacts with PlsX.

Its subcellular location is the cell membrane. The enzyme catalyses an acyl phosphate + sn-glycerol 3-phosphate = a 1-acyl-sn-glycero-3-phosphate + phosphate. The protein operates within lipid metabolism; phospholipid metabolism. In terms of biological role, catalyzes the transfer of an acyl group from acyl-phosphate (acyl-PO(4)) to glycerol-3-phosphate (G3P) to form lysophosphatidic acid (LPA). This enzyme utilizes acyl-phosphate as fatty acyl donor, but not acyl-CoA or acyl-ACP. The chain is Glycerol-3-phosphate acyltransferase from Exiguobacterium sibiricum (strain DSM 17290 / CCUG 55495 / CIP 109462 / JCM 13490 / 255-15).